The following is a 114-amino-acid chain: UPF0757 protein YmgG (114 aa).

This sequence belongs to the UPF0757 family.

The protein is UPF0757 protein YmgG of Escherichia fergusonii (strain ATCC 35469 / DSM 13698 / CCUG 18766 / IAM 14443 / JCM 21226 / LMG 7866 / NBRC 102419 / NCTC 12128 / CDC 0568-73).